We begin with the raw amino-acid sequence, 364 residues long: Inner membrane ABC transporter permease protein YejB (364 aa).

Residues 1 to 8 are Periplasmic-facing; it reads MGAYLIRR. Residues 9 to 29 traverse the membrane as a helical segment; that stretch reads LLLVIPTLWAIITINFFIVQI. Residues 30-37 lie on the Cytoplasmic side of the membrane; the sequence is APGGPVDQ. The chain crosses the membrane as a helical span at residues 38 to 58; the sequence is AIAAIEFGNAGVLPGAGGEGV. Residues 59 to 135 are Periplasmic-facing; it reads RASHAQTGVG…LTLIKDSLPV (77 aa). The ABC transmembrane type-1 domain occupies 133–348; that stretch reads LPVSITLGLW…LIGLLLNIVS (216 aa). Residues 136-156 form a helical membrane-spanning segment; the sequence is SITLGLWSTLIIYLVSIPLGI. The Cytoplasmic portion of the chain corresponds to 157 to 172; that stretch reads RKAVYNGSRFDVWSSA. A helical membrane pass occupies residues 173 to 193; sequence FIIIGYAIPAFLFAILLIVFF. Residues 194 to 224 are Periplasmic-facing; the sequence is AGGSYFDLFPLRGLVSANFDSLPWYQKITDY. Residues 225-245 traverse the membrane as a helical segment; that stretch reads LWHITLPVLATVIGGFAALTM. Over 246-284 the chain is Cytoplasmic; it reads LTKNSFLDEVRKQYVVTARAKGVSEKNILWKHVFRNAML. Residues 285 to 305 form a helical membrane-spanning segment; it reads LVIAGFPATFISMFFTGSLLI. Residues 306-326 are Periplasmic-facing; sequence EVMFSLNGLGLLGYEATVSRD. A helical transmembrane segment spans residues 327 to 347; sequence YPVMFGTLYIFTLIGLLLNIV. The Cytoplasmic segment spans residues 348 to 364; it reads SDISYTLVDPRIDFEGR.

The protein belongs to the binding-protein-dependent transport system permease family. OppBC subfamily.

It is found in the cell inner membrane. Functionally, probably part of a binding-protein-dependent transport system. Probably responsible for the translocation of the substrate across the membrane. This is Inner membrane ABC transporter permease protein YejB (yejB) from Escherichia coli O157:H7.